The following is a 161-amino-acid chain: Allophycocyanin beta chain (161 aa).

Residue Asn-71 is modified to N4-methylasparagine. Position 81 (Cys-81) interacts with (2R,3E)-phycocyanobilin.

Belongs to the phycobiliprotein family. In terms of assembly, heterodimer of an alpha and a beta chain. In terms of processing, contains one covalently linked phycocyanobilin chromophore.

The protein localises to the plastid. Its subcellular location is the chloroplast thylakoid membrane. Its function is as follows. Light-harvesting photosynthetic bile pigment-protein from the phycobiliprotein complex. Allophycocyanin has a maximum absorption at approximately 650 nanometers. The chain is Allophycocyanin beta chain (apcB) from Aglaothamnion neglectum (Red alga).